A 156-amino-acid chain; its full sequence is Small ribosomal subunit protein uS7 (156 aa).

The protein belongs to the universal ribosomal protein uS7 family. As to quaternary structure, part of the 30S ribosomal subunit. Contacts proteins S9 and S11.

Its function is as follows. One of the primary rRNA binding proteins, it binds directly to 16S rRNA where it nucleates assembly of the head domain of the 30S subunit. Is located at the subunit interface close to the decoding center, probably blocks exit of the E-site tRNA. This chain is Small ribosomal subunit protein uS7, found in Acidithiobacillus ferrooxidans (strain ATCC 53993 / BNL-5-31) (Leptospirillum ferrooxidans (ATCC 53993)).